Consider the following 469-residue polypeptide: Acetyl-CoA decarbonylase/synthase complex subunit beta 1 (469 aa).

[Ni-Fe-S] cluster is bound by residues Cys189, Cys192, Cys278, and Cys280.

Belongs to the CdhC family. In terms of assembly, monomer. The ACDS complex is made up of alpha, epsilon, beta, gamma and delta chains with a probable stoichiometry of (alpha(2)epsilon(2))(4)-beta(8)-(gamma(1)delta(1))(8) (Potential). The cofactor is [Ni-Fe-S] cluster.

It carries out the reaction Co(I)-[corrinoid Fe-S protein] + acetyl-CoA + H(+) = methyl-Co(III)-[corrinoid Fe-S protein] + CO + CoA. It participates in one-carbon metabolism; methanogenesis from acetate. In terms of biological role, part of a complex that catalyzes the reversible cleavage of acetyl-CoA, allowing growth on acetate as sole source of carbon and energy. The alpha-epsilon complex generates CO from CO(2), while the beta subunit (this protein) combines the CO with CoA and a methyl group to form acetyl-CoA. The methyl group, which is incorporated into acetyl-CoA, is transferred to the beta subunit by a corrinoid iron-sulfur protein (the gamma-delta complex). The polypeptide is Acetyl-CoA decarbonylase/synthase complex subunit beta 1 (cdhC1) (Methanosarcina thermophila).